The following is an 887-amino-acid chain: Translation initiation factor IF-2 (887 aa).

The tract at residues 1-291 is disordered; it reads MTDQADTSER…RRRVERERKK (291 aa). Residues 58-117 show a composition bias toward low complexity; that stretch reads AAPAAAPAAAPAAAEEVAKKPVAAPEVKPAAPVEERPAPVAKAAPEVKAVPAPAPAAAPA. 4 stretches are compositionally biased toward basic and acidic residues: residues 148–178, 185–194, 201–215, and 267–276; these read SARE…EAER, AAEEASRHTA, RAAE…DDRP, and AFDDESERQR. Residues 385–553 form the tr-type G domain; it reads ARAPVVTVMG…TILLQAELLD (169 aa). A G1 region spans residues 394–401; sequence GHVDHGKT. Position 394 to 401 (394 to 401) interacts with GTP; that stretch reads GHVDHGKT. The interval 419-423 is G2; it reads GITQH. Positions 441–444 are G3; the sequence is DTPG. Residues 441–445 and 495–498 each bind GTP; these read DTPGH and NKMD. The G4 stretch occupies residues 495 to 498; it reads NKMD. Positions 531 to 533 are G5; sequence SAK.

Belongs to the TRAFAC class translation factor GTPase superfamily. Classic translation factor GTPase family. IF-2 subfamily.

Its subcellular location is the cytoplasm. In terms of biological role, one of the essential components for the initiation of protein synthesis. Protects formylmethionyl-tRNA from spontaneous hydrolysis and promotes its binding to the 30S ribosomal subunits. Also involved in the hydrolysis of GTP during the formation of the 70S ribosomal complex. The polypeptide is Translation initiation factor IF-2 (Parvibaculum lavamentivorans (strain DS-1 / DSM 13023 / NCIMB 13966)).